The sequence spans 621 residues: Ubiquitin carboxyl-terminal hydrolase MINDY-2 (621 aa).

Disordered stretches follow at residues 1–106 (MESS…RGQY) and 119–179 (VGHE…LESF). A Phosphoserine modification is found at Ser-94. A compositionally biased stretch (low complexity) spans 145–163 (AAGSEEPSSAGGLSSSCSD). Catalysis depends on Cys-266, which acts as the Nucleophile. His-448 functions as the Proton acceptor in the catalytic mechanism. The interval 507–559 (GQQDQIDQDYLMALSLQQEQQSQEINWEQIPEGISDLELAKKLQEEEDRRASQ) is ubiquitin-binding domain (UBD). The disordered stretch occupies residues 556-621 (RASQYYQEQE…EKEKNSCVIL (66 aa)). Residues 558-591 (SQYYQEQEQAAAAAAAASTQAQQGQPAQASPSSG) show a composition bias toward low complexity. Residues 597 to 621 (SERKRKEPREKDKEKEKEKNSCVIL) are compositionally biased toward basic and acidic residues.

Belongs to the MINDY deubiquitinase family. FAM63 subfamily.

It catalyses the reaction Thiol-dependent hydrolysis of ester, thioester, amide, peptide and isopeptide bonds formed by the C-terminal Gly of ubiquitin (a 76-residue protein attached to proteins as an intracellular targeting signal).. Its function is as follows. Hydrolase that can remove 'Lys-48'-linked conjugated ubiquitin from proteins. Binds to polyubiquitin chains of different linkage types, including 'Lys-6', 'Lys-11', 'Lys-29', 'Lys-33', 'Lys-48' and 'Lys-63'. May play a regulatory role at the level of protein turnover. This is Ubiquitin carboxyl-terminal hydrolase MINDY-2 from Homo sapiens (Human).